Here is a 127-residue protein sequence, read N- to C-terminus: Fumarate reductase subunit C (127 aa).

Transmembrane regions (helical) follow at residues 30-50 (ATIL…GSLV), 67-87 (IVVA…QTFF), and 107-127 (VVVL…LVIV).

Belongs to the FrdC family. As to quaternary structure, part of an enzyme complex containing four subunits: a flavoprotein (FrdA), an iron-sulfur protein (FrdB), and two hydrophobic anchor proteins (FrdC and FrdD).

Its subcellular location is the cell inner membrane. In terms of biological role, anchors the catalytic components of the fumarate reductase complex to the cell membrane, binds quinones. The sequence is that of Fumarate reductase subunit C from Aliivibrio salmonicida (strain LFI1238) (Vibrio salmonicida (strain LFI1238)).